The primary structure comprises 504 residues: Maturase K (504 aa).

Belongs to the intron maturase 2 family. MatK subfamily.

It is found in the plastid. It localises to the chloroplast. In terms of biological role, usually encoded in the trnK tRNA gene intron. Probably assists in splicing its own and other chloroplast group II introns. This is Maturase K from Adansonia digitata (Baobab tree).